Here is a 596-residue protein sequence, read N- to C-terminus: uncharacterized protein (596 aa).

The N-terminal stretch at 1–20 is a signal peptide; that stretch reads MRYKPLLLALMLVFSTPAVA. Basic and acidic residues-rich tracts occupy residues 25 to 90 and 161 to 184; these read AHNR…KEAT and VRSDKNGKAVKQDKKYREEKNAKT. The interval 25 to 184 is disordered; sequence AHNRSAEVKK…KYREEKNAKT (160 aa). 2 coiled-coil regions span residues 177–281 and 318–454; these read REEK…RFVS and NREV…TAED.

It belongs to the peptidase M23B family.

This is an uncharacterized protein from Neisseria meningitidis serogroup B (strain ATCC BAA-335 / MC58).